A 428-amino-acid polypeptide reads, in one-letter code: Somatostatin receptor type 3 (428 aa).

The Extracellular segment spans residues 1–45 (MAAVTYPSSVPTTLDPGNASSAWPLDTSLGNASAGTSLAGLAVSG). Asn-18 and Asn-31 each carry an N-linked (GlcNAc...) asparagine glycan. Residues 46–71 (ILISLVYLVVCVVGLLGNSLVIYVVL) form a helical membrane-spanning segment. The Cytoplasmic portion of the chain corresponds to 72 to 81 (RHTSSPSVTS). Residues 82 to 103 (VYILNLALADELFMLGLPFLAA) form a helical membrane-spanning segment. Over 104 to 118 (QNALSYWPFGSLMCR) the chain is Extracellular. The cysteines at positions 117 and 192 are disulfide-linked. A helical transmembrane segment spans residues 119-140 (LVMAVDGINQFTSIFCLTVMSV). Topologically, residues 141–162 (DRYLAVVHPTRSARWRTAPVAR) are cytoplasmic. The helical transmembrane segment at 163 to 182 (MVSAAVWVASAVVVLPVVVF) threads the bilayer. Residues 183 to 206 (SGVPRGMSTCHMQWPEPAAAWRTA) are Extracellular-facing. A helical transmembrane segment spans residues 207-232 (FIIYTAALGFFGPLLVICLCYLLIVV). The Cytoplasmic portion of the chain corresponds to 233 to 266 (KVRSTTRRVRAPSCQWVQAPACQRRRRSERRVTR). A helical membrane pass occupies residues 267-288 (MVVAVVALFVLCWMPFYLLNIV). Topologically, residues 289 to 302 (NVVCPLPEEPAFFG) are extracellular. Residues 303-325 (LYFLVVALPYANSCANPILYGFL) traverse the membrane as a helical segment. The Cytoplasmic segment spans residues 326–428 (SYRFKQGFRR…GDKASTLSHL (103 aa)). Ser-341, Ser-346, and Ser-351 each carry phosphoserine. The interval 343-428 (RVRSQEPGSG…GDKASTLSHL (86 aa)) is disordered. Thr-357 is modified (phosphothreonine). Residues 357 to 370 (TEEEEDEEEEERRE) show a composition bias toward acidic residues. The span at 385-412 (RLSQIAQPGPSGQQQRPCTGTAKEQQLL) shows a compositional bias: polar residues.

The protein belongs to the G-protein coupled receptor 1 family. As to quaternary structure, homodimer and heterodimer with SSTR2. Heterodimerization with SSTR2 inactivates SSTR3 receptor function. Phosphorylated. Phosphorylation increases upon somatostatin binding. In terms of tissue distribution, densely expressed in cerebellum and at moderate levels in the amygdala, cortex, striatum, spleen, liver and pituitary.

Its subcellular location is the cell membrane. Receptor for somatostatin-14 and -28. This receptor is coupled via pertussis toxin sensitive G proteins to inhibition of adenylyl cyclase. The sequence is that of Somatostatin receptor type 3 (Sstr3) from Rattus norvegicus (Rat).